A 469-amino-acid polypeptide reads, in one-letter code: Ribosomal protein uS12 methylthiotransferase RimO (469 aa).

Residues 17–132 (PRVGFVSLGC…VMDAVHLNLP (116 aa)) enclose the MTTase N-terminal domain. Positions 26, 62, 91, 167, 171, and 174 each coordinate [4Fe-4S] cluster. In terms of domain architecture, Radical SAM core spans 153 to 395 (LTPKHYAYLK…AVAEEVSSLK (243 aa)). In terms of domain architecture, TRAM spans 397–469 (QQRVGATMQV…QGHDLVAIPV (73 aa)).

Belongs to the methylthiotransferase family. RimO subfamily. [4Fe-4S] cluster serves as cofactor.

The protein localises to the cytoplasm. The enzyme catalyses L-aspartate(89)-[ribosomal protein uS12]-hydrogen + (sulfur carrier)-SH + AH2 + 2 S-adenosyl-L-methionine = 3-methylsulfanyl-L-aspartate(89)-[ribosomal protein uS12]-hydrogen + (sulfur carrier)-H + 5'-deoxyadenosine + L-methionine + A + S-adenosyl-L-homocysteine + 2 H(+). In terms of biological role, catalyzes the methylthiolation of an aspartic acid residue of ribosomal protein uS12. In Polaromonas sp. (strain JS666 / ATCC BAA-500), this protein is Ribosomal protein uS12 methylthiotransferase RimO.